A 136-amino-acid chain; its full sequence is Large ribosomal subunit protein uL16 (136 aa).

It belongs to the universal ribosomal protein uL16 family. In terms of assembly, part of the 50S ribosomal subunit.

Its function is as follows. Binds 23S rRNA and is also seen to make contacts with the A and possibly P site tRNAs. This Sodalis glossinidius (strain morsitans) protein is Large ribosomal subunit protein uL16.